A 377-amino-acid polypeptide reads, in one-letter code: All-trans-retinol dehydrogenase [NAD(+)] ADH4 (377 aa).

Cysteine 47 contacts Zn(2+). Threonine 49 serves as a coordination point for NAD(+). The Zn(2+) site is built by histidine 68, cysteine 98, cysteine 101, cysteine 104, cysteine 112, and cysteine 179. Residues 204–209, aspartate 228, lysine 233, 297–299, 320–322, and arginine 372 each bind NAD(+); these read GLGCVG, VGA, and TFF.

It belongs to the zinc-containing alcohol dehydrogenase family. Class-II subfamily. In terms of assembly, dimer. The cofactor is Zn(2+). In terms of tissue distribution, liver specific.

It is found in the cytoplasm. The enzyme catalyses all-trans-retinol + NAD(+) = all-trans-retinal + NADH + H(+). The catalysed reaction is 9-cis-retinol + NAD(+) = 9-cis-retinal + NADH + H(+). It carries out the reaction 20-hydroxy-(5Z,8Z,11Z,14Z)-eicosatetraenoate + NAD(+) = 20-oxo-(5Z,8Z,11Z,14Z)-eicosatetraenoate + NADH + H(+). It catalyses the reaction 20-oxo-(5Z,8Z,11Z,14Z)-eicosatetraenoate + NAD(+) + H2O = (5Z,8Z,11Z,14Z)-eicosatetraenedioate + NADH + 2 H(+). The enzyme catalyses 1,4-benzoquinone + NADH + H(+) = hydroquinone + NAD(+). Its activity is regulated as follows. Oxidation of 20-HETE is inhibited by low concentrations of N-heptylformamide. Oxidation of 20-HETE is a decreased by 55-65% by either all-trans-retinol or all-trans-retinoic acid. Strongly inhibited by omega-hydroxy fatty acids. Catalyzes the NAD-dependent oxidation of either all-trans-retinol or 9-cis-retinol. Also oxidizes long chain omega-hydroxy fatty acids, such as 20-HETE, producing both the intermediate aldehyde, 20-oxoarachidonate and the end product, a dicarboxylic acid, (5Z,8Z,11Z,14Z)-eicosatetraenedioate. Also catalyzes the reduction of benzoquinones. The polypeptide is All-trans-retinol dehydrogenase [NAD(+)] ADH4 (Mus musculus (Mouse)).